A 144-amino-acid polypeptide reads, in one-letter code: Bacilliredoxin BH1716 (144 aa).

It belongs to the bacilliredoxin family.

The protein is Bacilliredoxin BH1716 of Halalkalibacterium halodurans (strain ATCC BAA-125 / DSM 18197 / FERM 7344 / JCM 9153 / C-125) (Bacillus halodurans).